Here is a 240-residue protein sequence, read N- to C-terminus: Probable transcriptional regulatory protein OEOE_0768 (240 aa).

Positions 1 to 21 (MSGHSKWHNIQGRKNAQDAKR) are disordered.

It belongs to the TACO1 family.

The protein localises to the cytoplasm. The protein is Probable transcriptional regulatory protein OEOE_0768 of Oenococcus oeni (strain ATCC BAA-331 / PSU-1).